A 323-amino-acid polypeptide reads, in one-letter code: Cytochrome c biogenesis protein CcsA (323 aa).

The next 8 membrane-spanning stretches (helical) occupy residues 9–29 (ILTH…LITL), 37–57 (LYVS…GLLV), 71–91 (LYES…FTYF), 100–120 (VSAI…SGFL), 145–165 (MVLG…LIVI), 227–247 (IISL…VWAN), 261–275 (TWAF…IYLH), and 288–308 (AIVA…VNLL).

The protein belongs to the CcmF/CycK/Ccl1/NrfE/CcsA family. As to quaternary structure, may interact with Ccs1.

The protein resides in the plastid. The protein localises to the chloroplast thylakoid membrane. Required during biogenesis of c-type cytochromes (cytochrome c6 and cytochrome f) at the step of heme attachment. This chain is Cytochrome c biogenesis protein CcsA, found in Cucumis sativus (Cucumber).